The sequence spans 673 residues: Auxin response factor 9 (673 aa).

A DNA-binding region (TF-B3) is located at residues 126–228 (FCKTLTASDT…ELRVGVRRLM (103 aa)). Disordered regions lie at residues 356-386 (ELEPLDASNPQPPQPPLRNKRARPPASPSVV) and 514-545 (DSDQISQPSNGNKSDAPGTSSERSPLESQSRQ). Over residues 516–545 (DQISQPSNGNKSDAPGTSSERSPLESQSRQ) the composition is skewed to polar residues. A PB1 domain is found at 547–639 (RSCTKVIMQG…EEAKLLAPKS (93 aa)).

This sequence belongs to the ARF family. As to quaternary structure, homodimers and heterodimers. As to expression, expressed in roots, culms, leaves and young panicles.

The protein resides in the nucleus. Functionally, auxin response factors (ARFs) are transcriptional factors that bind specifically to the DNA sequence 5'-TGTCTC-3' found in the auxin-responsive promoter elements (AuxREs). The sequence is that of Auxin response factor 9 (ARF9) from Oryza sativa subsp. japonica (Rice).